The chain runs to 647 residues: Spindle pole body-associated protein VIK1 (647 aa).

The span at 36–51 shows a compositional bias: polar residues; the sequence is NTTNTMNGSRPSSMKS. Residues 36–55 form a disordered region; sequence NTTNTMNGSRPSSMKSSLAL. Residues 202 to 350 adopt a coiled-coil conformation; sequence DHEITEEISQ…SKQEKFYNDT (149 aa).

Interacts with KAR3; the interaction is direct.

It is found in the cytoplasm. It localises to the cytoskeleton. The protein resides in the microtubule organizing center. The protein localises to the spindle pole body. Its subcellular location is the nucleus. In terms of biological role, together with the minus end-directed microtubule motor KAR3, plays a role in microtubule organization. Recruits KAR3 to microtubules, and together they may stabilize the polymers. The KAR3-VIK1 heterodimer cross-links anti-parallel microtubules. Targets and/or maintains KAR3 at the spindle pole body during vegetative growth. The sequence is that of Spindle pole body-associated protein VIK1 (VIK1) from Saccharomyces cerevisiae (strain ATCC 204508 / S288c) (Baker's yeast).